A 585-amino-acid chain; its full sequence is Glutamine--tRNA ligase (585 aa).

Positions 51–61 match the 'HIGH' region motif; that stretch reads PEPNGYLHIGH. ATP is bound by residues 52–54 and 58–64; these read EPN and HIGHAKS. D84 and Y238 together coordinate L-glutamine. Residues T257 and 292 to 293 each bind ATP; that span reads RL. Positions 299-303 match the 'KMSKS' region motif; it reads ITSKR.

The protein belongs to the class-I aminoacyl-tRNA synthetase family. Monomer.

The protein resides in the cytoplasm. The enzyme catalyses tRNA(Gln) + L-glutamine + ATP = L-glutaminyl-tRNA(Gln) + AMP + diphosphate. This chain is Glutamine--tRNA ligase, found in Cupriavidus taiwanensis (strain DSM 17343 / BCRC 17206 / CCUG 44338 / CIP 107171 / LMG 19424 / R1) (Ralstonia taiwanensis (strain LMG 19424)).